The sequence spans 703 residues: Cyclic AMP-dependent transcription factor ATF-6 beta (703 aa).

A2 bears the N-acetylalanine mark. Positions A2–Q86 are transcription activation. The Cytoplasmic segment spans residues A2–K396. 3 disordered regions span residues V87–E114, L229–P248, and E293–C317. Over residues S89–E114 the composition is skewed to low complexity. The region spanning L325–L388 is the bZIP domain. The segment at K327–K347 is basic motif. Positions L350–L357 are leucine-zipper. Residues V397–S417 traverse the membrane as a helical; Signal-anchor for type II membrane protein segment. Over E418 to P703 the chain is Lumenal. Residues P447 to A479 form a disordered region. 2 N-linked (GlcNAc...) asparagine glycosylation sites follow: N476 and N505. The segment at Q521–V565 is disordered. Residues R522–P531 show a composition bias toward basic residues. N610, N627, and N676 each carry an N-linked (GlcNAc...) asparagine glycan. The span at S660 to N676 shows a compositional bias: polar residues. Residues S660–P703 are disordered. A compositionally biased stretch (low complexity) spans S685–Q696.

This sequence belongs to the bZIP family. ATF subfamily. In terms of assembly, homodimer and heterodimer with ATF6-alpha. The dimer interacts with the nuclear transcription factor Y (NF-Y) trimer through direct binding to NF-Y subunit C (NF-YC). In terms of processing, N-glycosylated. During unfolded protein response, a fragment of approximately 60 kDa containing the cytoplasmic transcription factor domain is released by proteolysis. The cleavage is probably performed sequentially by site-1 (MBTPS1, S1P) and site-2 (MBTPS2, S2P) proteases. Ubiquitous.

Its subcellular location is the endoplasmic reticulum membrane. It is found in the nucleus. Functionally, precursor of the transcription factor form (Processed cyclic AMP-dependent transcription factor ATF-6 beta), which is embedded in the endoplasmic reticulum membrane. Endoplasmic reticulum stress promotes processing of this form, releasing the transcription factor form that translocates into the nucleus, where it activates transcription of genes involved in the unfolded protein response (UPR). Transcription factor that acts in the unfolded protein response (UPR) pathway by activating UPR target genes induced during ER stress. Binds DNA on the 5'-CCAC[GA]-3' half of the ER stress response element (ERSE) (5'-CCAATN(9)CCAC[GA]-3') when NF-Y is bound to ERSE. The polypeptide is Cyclic AMP-dependent transcription factor ATF-6 beta (ATF6B) (Homo sapiens (Human)).